We begin with the raw amino-acid sequence, 561 residues long: Sesquiterpene synthase 2 (561 aa).

Residues D313, D317, D458, and E466 each coordinate Mg(2+). The DDXXD motif signature appears at 313–317 (DDIYD).

The protein belongs to the terpene synthase family. Tpsa subfamily. Mn(2+) is required as a cofactor. Requires Mg(2+) as cofactor.

The protein localises to the cytoplasm. It catalyses the reaction (2E,6E)-farnesyl diphosphate + H2O = kunzeaol + diphosphate. It functions in the pathway secondary metabolite biosynthesis; terpenoid biosynthesis. Its function is as follows. Involved in the biosynthesis of kunzeaol. Produces mainly (-)-germacrene D along with gamma-cadinene. This Thapsia garganica (Deadly carrot) protein is Sesquiterpene synthase 2 (STS2).